We begin with the raw amino-acid sequence, 309 residues long: S-methyl-5'-thioadenosine phosphorylase (309 aa).

Phosphate contacts are provided by residues T19, 64–65, and 97–98; these read RH and SA. Position 201 (M201) interacts with substrate. S202 provides a ligand contact to phosphate. Position 225 to 227 (225 to 227) interacts with substrate; it reads DYD.

The protein belongs to the PNP/MTAP phosphorylase family. MTAP subfamily. As to quaternary structure, homotrimer.

It is found in the cytoplasm. The protein localises to the nucleus. The catalysed reaction is S-methyl-5'-thioadenosine + phosphate = 5-(methylsulfanyl)-alpha-D-ribose 1-phosphate + adenine. Its pathway is amino-acid biosynthesis; L-methionine biosynthesis via salvage pathway; S-methyl-5-thio-alpha-D-ribose 1-phosphate from S-methyl-5'-thioadenosine (phosphorylase route): step 1/1. Catalyzes the reversible phosphorylation of S-methyl-5'-thioadenosine (MTA) to adenine and 5-methylthioribose-1-phosphate. Involved in the breakdown of MTA, a major by-product of polyamine biosynthesis. Responsible for the first step in the methionine salvage pathway after MTA has been generated from S-adenosylmethionine. Has broad substrate specificity with 6-aminopurine nucleosides as preferred substrates. The protein is S-methyl-5'-thioadenosine phosphorylase of Tuber melanosporum (strain Mel28) (Perigord black truffle).